The primary structure comprises 120 residues: MSRILMSQLTHPQRVRLLYKTILRLHRGLPAELRALGDNYVRDEFRRHLKCNPMEAQLFMTEWARYASTITQQLGIRGKPKGELGEEIDPKTVEMLKDDQVVQLYELMLAAKGVEDAQGK.

The N-terminal 36 residues, 1–36 (MSRILMSQLTHPQRVRLLYKTILRLHRGLPAELRAL), are a transit peptide targeting the mitochondrion.

The protein belongs to the complex I LYR family. SDHAF3 subfamily. As to quaternary structure, interacts with SdhB within an SdhA-SdhB subcomplex.

The protein localises to the mitochondrion matrix. In terms of biological role, plays an essential role in the assembly of succinate dehydrogenase (SDH), an enzyme complex (also referred to as respiratory complex II) that is a component of both the tricarboxylic acid (TCA) cycle and the mitochondrial electron transport chain, and which couples the oxidation of succinate to fumarate with the reduction of ubiquinone (coenzyme Q) to ubiquinol. Promotes maturation of the iron-sulfur protein subunit SdhB of the SDH catalytic dimer, protecting it from the deleterious effects of oxidants. The polypeptide is Succinate dehydrogenase assembly factor 3, mitochondrial (Drosophila melanogaster (Fruit fly)).